We begin with the raw amino-acid sequence, 413 residues long: DNA primase large subunit PriL (413 aa).

Cys230, Cys301, Cys310, and Cys317 together coordinate [4Fe-4S] cluster. Basic and acidic residues-rich tracts occupy residues 340 to 356 (MEKEKEEKEEKEKQEEK), 362 to 381 (KEKQEEIKKKKKKEKQEEKG), and 388 to 413 (KKRERKQEKETKRREGKEKQEEKKRI). The tract at residues 340–413 (MEKEKEEKEE…KEKQEEKKRI (74 aa)) is disordered.

It belongs to the eukaryotic-type primase large subunit family. Heterodimer of a small subunit (PriS) and a large subunit (PriL). The cofactor is [4Fe-4S] cluster.

Its function is as follows. Regulatory subunit of DNA primase, an RNA polymerase that catalyzes the synthesis of short RNA molecules used as primers for DNA polymerase during DNA replication. Stabilizes and modulates the activity of the small subunit, increasing the rate of DNA synthesis, and conferring RNA synthesis capability. The DNA polymerase activity may enable DNA primase to also catalyze primer extension after primer synthesis. May also play a role in DNA repair. This is DNA primase large subunit PriL from Methanosarcina barkeri (strain Fusaro / DSM 804).